A 1018-amino-acid polypeptide reads, in one-letter code: Serine/threonine-protein kinase 31 (1018 aa).

The Tudor domain occupies 78-137 (NLDPKKIYGGLFSEDKCWYRCKVLKTISDDKCLVRYIDYGNTEILNRSDIVEIPPELQFS). Positions 298-358 (AKIKQDQKLI…TKHLESTLKT (61 aa)) form a coiled coil. A Protein kinase domain is found at 711 to 1018 (IGLLKYMNSG…EKTRNGEANP (308 aa)). Residues 717–725 (MNSGGLLTM) and Lys738 each bind ATP. Positions 988–1018 (IECTQHSREDESKMESLDRYSEKTRNGEANP) are disordered.

Belongs to the protein kinase superfamily. Ser/Thr protein kinase family. In terms of tissue distribution, testis specific. Expressed only in male germ cells.

The enzyme catalyses L-seryl-[protein] + ATP = O-phospho-L-seryl-[protein] + ADP + H(+). It catalyses the reaction L-threonyl-[protein] + ATP = O-phospho-L-threonyl-[protein] + ADP + H(+). The polypeptide is Serine/threonine-protein kinase 31 (Stk31) (Mus musculus (Mouse)).